Here is a 153-residue protein sequence, read N- to C-terminus: 3-hydroxyacyl-[acyl-carrier-protein] dehydratase FabZ (153 aa).

The active site involves His-54.

The protein belongs to the thioester dehydratase family. FabZ subfamily.

It localises to the cytoplasm. It catalyses the reaction a (3R)-hydroxyacyl-[ACP] = a (2E)-enoyl-[ACP] + H2O. Functionally, involved in unsaturated fatty acids biosynthesis. Catalyzes the dehydration of short chain beta-hydroxyacyl-ACPs and long chain saturated and unsaturated beta-hydroxyacyl-ACPs. The protein is 3-hydroxyacyl-[acyl-carrier-protein] dehydratase FabZ of Shewanella sediminis (strain HAW-EB3).